A 132-amino-acid chain; its full sequence is Small ribosomal subunit protein uS8 (132 aa).

The protein belongs to the universal ribosomal protein uS8 family. Part of the 30S ribosomal subunit. Contacts proteins S5 and S12.

Its function is as follows. One of the primary rRNA binding proteins, it binds directly to 16S rRNA central domain where it helps coordinate assembly of the platform of the 30S subunit. The protein is Small ribosomal subunit protein uS8 of Geobacillus thermodenitrificans (strain NG80-2).